Reading from the N-terminus, the 332-residue chain is Thiamine thiazole synthase (332 aa).

Substrate is bound by residues cysteine 87, 108-109, glycine 116, and valine 184; that span reads EA. Position 221 is a 2,3-didehydroalanine (Cys) (cysteine 221). Residues aspartate 223, histidine 238, methionine 290, and 300 to 302 contribute to the substrate site; that span reads RMG.

Belongs to the THI4 family. In terms of assembly, homooctamer. Fe cation serves as cofactor. In terms of processing, during the catalytic reaction, a sulfide is transferred from Cys-221 to a reaction intermediate, generating a dehydroalanine residue.

It is found in the cytoplasm. It localises to the nucleus. The catalysed reaction is [ADP-thiazole synthase]-L-cysteine + glycine + NAD(+) = [ADP-thiazole synthase]-dehydroalanine + ADP-5-ethyl-4-methylthiazole-2-carboxylate + nicotinamide + 3 H2O + 2 H(+). Its function is as follows. Involved in biosynthesis of the thiamine precursor thiazole. Catalyzes the conversion of NAD and glycine to adenosine diphosphate 5-(2-hydroxyethyl)-4-methylthiazole-2-carboxylic acid (ADT), an adenylated thiazole intermediate. The reaction includes an iron-dependent sulfide transfer from a conserved cysteine residue of the protein to a thiazole intermediate. The enzyme can only undergo a single turnover, which suggests it is a suicide enzyme. May have additional roles in adaptation to various stress conditions and in DNA damage tolerance. In Aspergillus fumigatus (strain ATCC MYA-4609 / CBS 101355 / FGSC A1100 / Af293) (Neosartorya fumigata), this protein is Thiamine thiazole synthase.